The chain runs to 374 residues: Aminodeoxychorismate lyase (374 aa).

It belongs to the class-IV pyridoxal-phosphate-dependent aminotransferase family. As to quaternary structure, homodimer. Pyridoxal 5'-phosphate serves as cofactor.

The protein localises to the cytoplasm. The enzyme catalyses 4-amino-4-deoxychorismate = 4-aminobenzoate + pyruvate + H(+). It functions in the pathway cofactor biosynthesis; tetrahydrofolate biosynthesis; 4-aminobenzoate from chorismate: step 2/2. Functionally, converts 4-amino-4-deoxychorismate into 4-aminobenzoate (PABA) and pyruvate. In Saccharomyces cerevisiae (strain ATCC 204508 / S288c) (Baker's yeast), this protein is Aminodeoxychorismate lyase (ABZ2).